The following is a 151-amino-acid chain: Mediator of RNA polymerase II transcription subunit 32 (151 aa).

Positions 128–151 (GVAPGSVHSSSTGFDSRFSEDSTQ) are disordered.

The protein belongs to the mediator complex subunit 32 family. Oligomers. Component of the Mediator complex. Interacts with MED6. Interacts with GEBPL.

The protein resides in the nucleus. Its function is as follows. Component of the Mediator complex, a coactivator involved in the regulated transcription of nearly all RNA polymerase II-dependent genes. Mediator functions as a bridge to convey information from gene-specific regulatory proteins to the basal RNA polymerase II transcription machinery. The Mediator complex, having a compact conformation in its free form, is recruited to promoters by direct interactions with regulatory proteins and serves for the assembly of a functional pre-initiation complex with RNA polymerase II and the general transcription factors. In Arabidopsis thaliana (Mouse-ear cress), this protein is Mediator of RNA polymerase II transcription subunit 32 (MED32).